Here is a 242-residue protein sequence, read N- to C-terminus: Octanoyltransferase (242 aa).

Residues 31–206 (SQTTDEIWFL…LFLKNFGYNQ (176 aa)) form the BPL/LPL catalytic domain. Substrate is bound by residues 70 to 77 (RGGQVTYH), 137 to 139 (SIG), and 150 to 152 (GLA). Cysteine 168 (acyl-thioester intermediate) is an active-site residue.

Belongs to the LipB family.

The protein resides in the cytoplasm. It carries out the reaction octanoyl-[ACP] + L-lysyl-[protein] = N(6)-octanoyl-L-lysyl-[protein] + holo-[ACP] + H(+). The protein operates within protein modification; protein lipoylation via endogenous pathway; protein N(6)-(lipoyl)lysine from octanoyl-[acyl-carrier-protein]: step 1/2. In terms of biological role, catalyzes the transfer of endogenously produced octanoic acid from octanoyl-acyl-carrier-protein onto the lipoyl domains of lipoate-dependent enzymes. Lipoyl-ACP can also act as a substrate although octanoyl-ACP is likely to be the physiological substrate. In Coxiella burnetii (strain Dugway 5J108-111), this protein is Octanoyltransferase.